A 109-amino-acid chain; its full sequence is MEMDLNNRLTEDETLEQAYDIFLELAADNLDPADIILFNLQFEERGGAELFDPAEDWQEHVDFDLNPDFFAEVVIGLADTEDGEINDIFARVLLCREKDHKLCHILWRE.

Belongs to the putative dsDNA mimic protein family.

In terms of biological role, may act as a double-stranded DNA (dsDNA) mimic. Probably regulates the activity of a dsDNA-binding protein. This chain is Putative double-stranded DNA mimic protein YciU, found in Salmonella choleraesuis (strain SC-B67).